A 76-amino-acid polypeptide reads, in one-letter code: Spore germination protein-like protein YdzR (76 aa).

This sequence belongs to the GerPA/GerPF family.

The polypeptide is Spore germination protein-like protein YdzR (ydzR) (Bacillus subtilis (strain 168)).